Reading from the N-terminus, the 929-residue chain is Valine--tRNA ligase (929 aa).

A 'HIGH' region motif is present at residues 59–69 (PNVTGSLHMGH). Residues 557 to 561 (KMSKS) carry the 'KMSKS' region motif. K560 lines the ATP pocket. A coiled-coil region spans residues 862–929 (LVDLDALRGR…LARQRLSDLG (68 aa)).

It belongs to the class-I aminoacyl-tRNA synthetase family. ValS type 1 subfamily. Monomer.

Its subcellular location is the cytoplasm. It catalyses the reaction tRNA(Val) + L-valine + ATP = L-valyl-tRNA(Val) + AMP + diphosphate. Functionally, catalyzes the attachment of valine to tRNA(Val). As ValRS can inadvertently accommodate and process structurally similar amino acids such as threonine, to avoid such errors, it has a 'posttransfer' editing activity that hydrolyzes mischarged Thr-tRNA(Val) in a tRNA-dependent manner. In Prochlorococcus marinus (strain MIT 9313), this protein is Valine--tRNA ligase.